Reading from the N-terminus, the 403-residue chain is Large ribosomal subunit protein uL3 (403 aa).

Positions 1–38 (MSHRKFSAPRHGSLGFLPRKRSSRHRGKVKSFPKDDSS) are disordered. Residue Ser-13 is modified to Phosphoserine. Basic residues predominate over residues 18–31 (PRKRSSRHRGKVKS). A Glycyl lysine isopeptide (Lys-Gly) (interchain with G-Cter in SUMO2) cross-link involves residue Lys-39. The residue at position 136 (Lys-136) is an N6-acetyllysine. Glycyl lysine isopeptide (Lys-Gly) (interchain with G-Cter in SUMO2) cross-links involve residues Lys-224 and Lys-226. The residue at position 245 (His-245) is a Tele-methylhistidine. Residues Lys-286 and Lys-294 each carry the N6-acetyllysine; alternate modification. Lys-286 is covalently cross-linked (Glycyl lysine isopeptide (Lys-Gly) (interchain with G-Cter in SUMO2); alternate). Lys-294 participates in a covalent cross-link: Glycyl lysine isopeptide (Lys-Gly) (interchain with G-Cter in SUMO1); alternate. Ser-304 is modified (phosphoserine). N6-acetyllysine; alternate is present on Lys-366. Lys-366 participates in a covalent cross-link: Glycyl lysine isopeptide (Lys-Gly) (interchain with G-Cter in SUMO2); alternate. Lys-373 bears the N6-acetyllysine mark. Residues Lys-386, Lys-393, and Lys-399 each participate in a glycyl lysine isopeptide (Lys-Gly) (interchain with G-Cter in SUMO2) cross-link.

Belongs to the universal ribosomal protein uL3 family. Component of the large ribosomal subunit. Interacts with DHX33. In terms of processing, constitutively monomethylated at His-245 by METTL18. Methylation at His-245 regulates translation elongation by slowing ribosome traversal on tyrosine codons: slower elongation provides enough time for proper folding of synthesized proteins and prevents cellular aggregation of tyrosine-rich proteins It is not required for incorporation of RPL3 into ribosomes.

Its subcellular location is the nucleus. The protein localises to the nucleolus. It localises to the cytoplasm. Functionally, component of the large ribosomal subunit. The ribosome is a large ribonucleoprotein complex responsible for the synthesis of proteins in the cell. The chain is Large ribosomal subunit protein uL3 (RPL3) from Sus scrofa (Pig).